Consider the following 416-residue polypeptide: MNSPADYDPKPRRASVAVDVGGVIVGGGAPVVVQSMTNTDTADIDATVRQVAALFQAGSEMVRITVDRDESAAAVPKIRERLLRLGMDVPLIGDFHYIGHKLLADHPACAEALAKYRINPGNVGFKDKKDKQFGEIVEMAIRYDKPVRIGVNWGSLDQELLTTLMDRNKEQGFPLSARQVTREAIVQSALISAELAEEIGLPRNRIILSAKVSQVQDLIAVYSMLSERSNHALHLGLTEAGMGSKGIVASSAAMGYVLQHGIGDTIRVSLTPEPNGDRTREVQVAQELLQVMGFRQFIPVVAACPGCGRTTSTVFQELAQNIQNDIRKNMPIWREKYPGVEALNVAVMGCIVNGPGESKHADIGISLPGTGESPAAPVFIDGEKALTLRGPNIAADFEALVIDYIEKRFGQKDAAE.

Positions 304, 307, 350, and 357 each coordinate [4Fe-4S] cluster.

The protein belongs to the IspG family. [4Fe-4S] cluster serves as cofactor.

It carries out the reaction (2E)-4-hydroxy-3-methylbut-2-enyl diphosphate + oxidized [flavodoxin] + H2O + 2 H(+) = 2-C-methyl-D-erythritol 2,4-cyclic diphosphate + reduced [flavodoxin]. The protein operates within isoprenoid biosynthesis; isopentenyl diphosphate biosynthesis via DXP pathway; isopentenyl diphosphate from 1-deoxy-D-xylulose 5-phosphate: step 5/6. Functionally, converts 2C-methyl-D-erythritol 2,4-cyclodiphosphate (ME-2,4cPP) into 1-hydroxy-2-methyl-2-(E)-butenyl 4-diphosphate. This is 4-hydroxy-3-methylbut-2-en-1-yl diphosphate synthase (flavodoxin) from Agrobacterium fabrum (strain C58 / ATCC 33970) (Agrobacterium tumefaciens (strain C58)).